Reading from the N-terminus, the 205-residue chain is Recombination protein RecR (205 aa).

A C4-type zinc finger spans residues C58–C75. Residues R83 to P182 enclose the Toprim domain.

This sequence belongs to the RecR family.

Its function is as follows. May play a role in DNA repair. It seems to be involved in an RecBC-independent recombinational process of DNA repair. It may act with RecF and RecO. The protein is Recombination protein RecR of Chloroherpeton thalassium (strain ATCC 35110 / GB-78).